A 325-amino-acid polypeptide reads, in one-letter code: MGSASPGLSNVSPGCLLLFPDVAPRTGTEKAASGAMGPEKQEWSPSPPATPEQGLSAFYLSYFNMYPDDSSWVAKVPEARAGEDHPEEPEQCPVIDSQASGSTLDEHSLEQVQSMVVGEVLKDIETACKLLNITADPGDWSPGNVQKWLLWTEHQYRLPPAGKAFQELGGKELCAMSEEQFRQRAPLGGDVLHAHLDIWKSAAWMKERTSPGTLHYCASTSEEGWTDGEVDSSCSGQPIHLWQFLKELLLKPHSYGRFIRWLNKEKGIFKIEDSAQVARLWGVRKNRPAMNYDKLSRSIRQYYKKGIIRKPDISQRLVYQFVHPV.

Disordered regions lie at residues 27 to 50 and 79 to 100; these read GTEK…PPAT and ARAG…SQAS. The PNT domain occupies 119–203; the sequence is EVLKDIETAC…AHLDIWKSAA (85 aa). The ETS DNA-binding region spans 239–322; the sequence is IHLWQFLKEL…ISQRLVYQFV (84 aa).

This sequence belongs to the ETS family. In terms of assembly, interacts with the DNA-binding domain of the androgen receptor. Interacts with NKX3-1. Expressed in the accessory glands of sex organs including the prostate, seminal vesicle, coagulating gland in males, the oviduct in females, and in intestines. Expression is epithelial-specific.

Its subcellular location is the nucleus. Functionally, may function as an androgen-independent transactivator of the prostate-specific antigen (PSA) promoter. Binds to 5'-GGAT-3' DNA sequences. May play a role in the regulation of the prostate gland and/or prostate cancer development. Acts as a transcriptional activator for SERPINB5 promoter. The protein is SAM pointed domain-containing Ets transcription factor (Spdef) of Mus musculus (Mouse).